A 523-amino-acid polypeptide reads, in one-letter code: Probable methylmalonate-semialdehyde/malonate-semialdehyde dehydrogenase [acylating], mitochondrial (523 aa).

A mitochondrion-targeting transit peptide spans 1–22 (MLSRLARVQPKCQQLAHFSTSK). Residues F175, K199, and E202 each coordinate NAD(+). Catalysis depends on C307, which acts as the Nucleophile. NAD(+) is bound at residue E407.

It belongs to the aldehyde dehydrogenase family. As to quaternary structure, homodimer.

Its subcellular location is the mitochondrion. The catalysed reaction is 2-methyl-3-oxopropanoate + NAD(+) + CoA + H2O = propanoyl-CoA + hydrogencarbonate + NADH + H(+). It catalyses the reaction 3-oxopropanoate + NAD(+) + CoA + H2O = hydrogencarbonate + acetyl-CoA + NADH + H(+). Probable malonate and methylmalonate semialdehyde dehydrogenase involved in the catabolism of valine, thymine, and compounds catabolized by way of beta-alanine, including uracil and cytidine. The chain is Probable methylmalonate-semialdehyde/malonate-semialdehyde dehydrogenase [acylating], mitochondrial (alh-8) from Caenorhabditis elegans.